Here is a 102-residue protein sequence, read N- to C-terminus: Small ribosomal subunit protein uS10 (102 aa).

It belongs to the universal ribosomal protein uS10 family. In terms of assembly, part of the 30S ribosomal subunit.

Involved in the binding of tRNA to the ribosomes. In Cereibacter sphaeroides (strain ATCC 17029 / ATH 2.4.9) (Rhodobacter sphaeroides), this protein is Small ribosomal subunit protein uS10.